We begin with the raw amino-acid sequence, 1428 residues long: DNA polymerase III PolC-type (1428 aa).

The 157-residue stretch at 414–570 (FVVFDVETTG…YDAEATGYLL (157 aa)) folds into the Exonuclease domain.

Belongs to the DNA polymerase type-C family. PolC subfamily.

Its subcellular location is the cytoplasm. The enzyme catalyses DNA(n) + a 2'-deoxyribonucleoside 5'-triphosphate = DNA(n+1) + diphosphate. Its function is as follows. Required for replicative DNA synthesis. This DNA polymerase also exhibits 3' to 5' exonuclease activity. The polypeptide is DNA polymerase III PolC-type (Oceanobacillus iheyensis (strain DSM 14371 / CIP 107618 / JCM 11309 / KCTC 3954 / HTE831)).